Reading from the N-terminus, the 583-residue chain is Steryl-sulfatase (583 aa).

The signal sequence occupies residues 1–21; the sequence is MPLRKMKIPFLLLFFLWEAES. Topologically, residues 22 to 184 are lumenal; that stretch reads HAASRPNIIL…GSVFTTGFKR (163 aa). Positions 35 and 36 each coordinate Ca(2+). An N-linked (GlcNAc...) asparagine glycan is attached at N47. Position 75 (C75) interacts with Ca(2+). Residue C75 is the Nucleophile of the active site. The residue at position 75 (C75) is a 3-oxoalanine (Cys). Residue H136 is part of the active site. Intrachain disulfides connect C141-C148 and C170-C242. The chain crosses the membrane as a helical span at residues 185–208; that stretch reads LVFLPLQIVGVTLLTLAALNCLGL. The Cytoplasmic segment spans residues 209-212; the sequence is LHVP. Residues 213–234 traverse the membrane as a helical segment; the sequence is LGVFFSLLFLAALILTLFLGFL. Topologically, residues 235–583 are lumenal; the sequence is HYFRPLNCFM…REKQDKRLSR (349 aa). N-linked (GlcNAc...) asparagine glycosylation occurs at N259. Ca(2+)-binding residues include D342 and Q343. Intrachain disulfides connect C446–C489, C481–C487, C562–C570, and C563–C572.

Belongs to the sulfatase family. In terms of assembly, homodimer. Requires Ca(2+) as cofactor. The conversion to 3-oxoalanine (also known as C-formylglycine, FGly), of a serine or cysteine residue in prokaryotes and of a cysteine residue in eukaryotes, is critical for catalytic activity.

The protein resides in the cytoplasmic vesicle. Its subcellular location is the secretory vesicle. It is found in the microneme membrane. The protein localises to the endoplasmic reticulum membrane. The catalysed reaction is dehydroepiandrosterone 3-sulfate + H2O = 3beta-hydroxyandrost-5-en-17-one + sulfate + H(+). It carries out the reaction estrone 3-sulfate + H2O = estrone + sulfate + H(+). Its function is as follows. Catalyzes the conversion of sulfated steroid precursors, such as dehydroepiandrosterone sulfate (DHEA-S) and estrone sulfate to the free steroid. The protein is Steryl-sulfatase (STS) of Homo sapiens (Human).